Reading from the N-terminus, the 346-residue chain is tRNA N6-adenosine threonylcarbamoyltransferase (346 aa).

H111 and H115 together coordinate Fe cation. Substrate-binding positions include 134–138 (LVSGG), D167, G180, D184, and N279. A Fe cation-binding site is contributed by D307.

Belongs to the KAE1 / TsaD family. It depends on Fe(2+) as a cofactor.

The protein localises to the cytoplasm. It catalyses the reaction L-threonylcarbamoyladenylate + adenosine(37) in tRNA = N(6)-L-threonylcarbamoyladenosine(37) in tRNA + AMP + H(+). Its function is as follows. Required for the formation of a threonylcarbamoyl group on adenosine at position 37 (t(6)A37) in tRNAs that read codons beginning with adenine. Is involved in the transfer of the threonylcarbamoyl moiety of threonylcarbamoyl-AMP (TC-AMP) to the N6 group of A37, together with TsaE and TsaB. TsaD likely plays a direct catalytic role in this reaction. The chain is tRNA N6-adenosine threonylcarbamoyltransferase from Gloeothece citriformis (strain PCC 7424) (Cyanothece sp. (strain PCC 7424)).